A 359-amino-acid chain; its full sequence is Fructose-bisphosphate aldolase (359 aa).

Ser-50 contacts D-glyceraldehyde 3-phosphate. Asp-83 acts as the Proton donor in catalysis. Zn(2+)-binding residues include His-84, Asp-105, Glu-142, and His-198. Gly-199 is a dihydroxyacetone phosphate binding site. His-232 contacts Zn(2+). Dihydroxyacetone phosphate-binding positions include 233 to 235 (GSS) and 275 to 278 (NIDT).

Requires Zn(2+) as cofactor.

The catalysed reaction is beta-D-fructose 1,6-bisphosphate = D-glyceraldehyde 3-phosphate + dihydroxyacetone phosphate. It participates in carbohydrate degradation; glycolysis; D-glyceraldehyde 3-phosphate and glycerone phosphate from D-glucose: step 4/4. Functionally, catalyzes the aldol condensation of dihydroxyacetone phosphate (DHAP or glycerone-phosphate) with glyceraldehyde 3-phosphate (G3P) to form fructose 1,6-bisphosphate (FBP) in gluconeogenesis and the reverse reaction in glycolysis. The polypeptide is Fructose-bisphosphate aldolase (Nostoc sp. (strain PCC 7120 / SAG 25.82 / UTEX 2576)).